Reading from the N-terminus, the 443-residue chain is MKKKYFGTDGIRGKVGASLITPEFTLKLGWAAGRVLAKSGSKKVLIGKDPRISGYMLEAALEAGLAAAGLRPVLMGPMPTPAVAYLTQTFRATAGIVISASHNPYYDNGIKFFSDQGTKLSEEIELEIEAEIDKELKCVDSSELGKAYRIEDAAGRYIEFCKSTFPSKYNLNGLKVVVDCANGATYHIAPLVISELGADVIAMGVEPDGLNINLNCGATSMQAISERVVKENADFGIAFDGDGDRVMMVDHTGYVLDGDELLYIIARDKLRSGTLKGGAVGTKMSNLGLEQSLKTLGIPFERSDVGDRHVMELMIKNNWCIGAENSGHIICSDHLSTGDGIVSGLQVISAMQSSRMKLYELRQGIKKYPQILLNLGFDNKIDPLQDNDVLAEAKRIETLLGDKGRVLLRKSGTEPVFRIMVEADESEKVVRGYAKSIADKVKV.

Ser-101 serves as the catalytic Phosphoserine intermediate. Ser-101, Asp-240, Asp-242, and Asp-244 together coordinate Mg(2+). Residue Ser-101 is modified to Phosphoserine.

It belongs to the phosphohexose mutase family. The cofactor is Mg(2+). Activated by phosphorylation.

It carries out the reaction alpha-D-glucosamine 1-phosphate = D-glucosamine 6-phosphate. Functionally, catalyzes the conversion of glucosamine-6-phosphate to glucosamine-1-phosphate. The protein is Phosphoglucosamine mutase of Psychromonas ingrahamii (strain DSM 17664 / CCUG 51855 / 37).